The sequence spans 906 residues: MLGKLLTKVFGSRNDRTLKNLGKIVIQINALEADYEKLSDEELKAKTTEFRTRLENGETLDNIMAEAFAVVREASKRVFDMRPFDVQLLGGMVLDSNRIAEMRTGEGKTLTATLPAYLNGITGKGVHVITVNDYLATRDAENNRPLFEFLGLSVGINVAGLGQFEKKQAYDADITYGTNNEFGFDYLRDNMAFSPQERVQRPLHYALIDEVDSILIDEARTPLIISGAAEDSSELYAKINLLIPSLIPQDKEDTEDYVGEGDYSIDEKGKQVHLTERGQEKVELLLIEKGMLAEGDSLYSATNISLLHHVNAALRAHTLFEKDIDYIVQDDEVIIVDEHTGRTMPGRRWSEGLHQAVEAKEGAKIQNENQTLASITFQNYFRQYEKLAGMTGTADTEAFEFQHIYGLDTVVVPTNRPMVRKDMADLVYLTAPEKYAAIIKDIEGCRERGQPVLVGTVSIEQSELLNSLLKKANIPHSVLNAKFHEKEAEIVAQAGSLGAVTIATNMAGRGTDIVLGGNWNMEIEALENPTAEQKAKIKADWKIRHDEVLAAGGLHILGTERHESRRIDNQLRGRAGRQGDAGSSRFYLSMEDSLMRIFASDRVSGMMKKLGMEEGEAIEHPWVSRAIENAQRKVEARNFDIRKQLLEYDDVANDQRQVVYAQRNELMDAESIQDTIQNIEQDVISGIVDQYIPPQSLEELWDVPGLEQRLGNEFGLKLTIQEWLDQDDNLHEETLRERILTSWSELYKAKEEMVGAQVLRQFEKAVMLQTLDGLWKEHLAAMDHLRQGIHLRGYAQKNPKQEYKRESFELFQQLLETLKNDVISVLSKVQVQAQSDVDEMEQRRRDEEAKIKLAYQHASVEALSDAGEQQIEAPKTVIREGEKIGRNDPCPCGSGQKYKQCHGKLS.

Residues Gln-87, 105–109, and Asp-512 contribute to the ATP site; that span reads GEGKT. The interval 879-906 is disordered; that stretch reads REGEKIGRNDPCPCGSGQKYKQCHGKLS. Residues Cys-890, Cys-892, Cys-901, and His-902 each coordinate Zn(2+).

This sequence belongs to the SecA family. As to quaternary structure, monomer and homodimer. Part of the essential Sec protein translocation apparatus which comprises SecA, SecYEG and auxiliary proteins SecDF-YajC and YidC. It depends on Zn(2+) as a cofactor.

Its subcellular location is the cell inner membrane. The protein localises to the cytoplasm. It carries out the reaction ATP + H2O + cellular proteinSide 1 = ADP + phosphate + cellular proteinSide 2.. In terms of biological role, part of the Sec protein translocase complex. Interacts with the SecYEG preprotein conducting channel. Has a central role in coupling the hydrolysis of ATP to the transfer of proteins into and across the cell membrane, serving both as a receptor for the preprotein-SecB complex and as an ATP-driven molecular motor driving the stepwise translocation of polypeptide chains across the membrane. In Shewanella frigidimarina (strain NCIMB 400), this protein is Protein translocase subunit SecA.